The chain runs to 442 residues: 3-phosphoshikimate 1-carboxyvinyltransferase (442 aa).

Over residues Met1 to Ala11 the composition is skewed to polar residues. Residues Met1 to Asp25 form a disordered region. The 3-phosphoshikimate site is built by Lys26, Ser27, and Arg31. A phosphoenolpyruvate-binding site is contributed by Lys26. 2 residues coordinate phosphoenolpyruvate: Gly98 and Arg126. 4 residues coordinate 3-phosphoshikimate: Ser171, Gln173, Asp324, and Lys351. Residue Gln173 participates in phosphoenolpyruvate binding. The Proton acceptor role is filled by Asp324. Phosphoenolpyruvate is bound by residues Arg355 and Arg398.

It belongs to the EPSP synthase family. Monomer.

It is found in the cytoplasm. It catalyses the reaction 3-phosphoshikimate + phosphoenolpyruvate = 5-O-(1-carboxyvinyl)-3-phosphoshikimate + phosphate. Its pathway is metabolic intermediate biosynthesis; chorismate biosynthesis; chorismate from D-erythrose 4-phosphate and phosphoenolpyruvate: step 6/7. Its function is as follows. Catalyzes the transfer of the enolpyruvyl moiety of phosphoenolpyruvate (PEP) to the 5-hydroxyl of shikimate-3-phosphate (S3P) to produce enolpyruvyl shikimate-3-phosphate and inorganic phosphate. In Gluconobacter oxydans (strain 621H) (Gluconobacter suboxydans), this protein is 3-phosphoshikimate 1-carboxyvinyltransferase.